We begin with the raw amino-acid sequence, 442 residues long: ATP-dependent RNA helicase SUB2-2 (442 aa).

Residues 58–86 (TGFKDFLLKPELARAIIDCGFEHPSEVQQ) carry the Q motif motif. The region spanning 89–264 (IPQSIHGTDV…RRFLQNPLEI (176 aa)) is the Helicase ATP-binding domain. Residue 102-109 (AKSGLGKT) coordinates ATP. A DECD box motif is present at residues 211-214 (DECD). One can recognise a Helicase C-terminal domain in the interval 292–437 (KLAQLLDDLE…EFPEEGIDPS (146 aa)).

It belongs to the DEAD box helicase family. DECD subfamily.

The protein resides in the nucleus. It carries out the reaction ATP + H2O = ADP + phosphate + H(+). Functionally, ATP-binding RNA helicase involved in transcription elongation and required for the export of mRNA out of the nucleus. SUB2 also plays a role in pre-mRNA splicing and spliceosome assembly. May be involved in rDNA and telomeric silencing, and maintenance of genome integrity. The sequence is that of ATP-dependent RNA helicase SUB2-2 (SUB2-2) from Vanderwaltozyma polyspora (strain ATCC 22028 / DSM 70294 / BCRC 21397 / CBS 2163 / NBRC 10782 / NRRL Y-8283 / UCD 57-17) (Kluyveromyces polysporus).